The primary structure comprises 658 residues: Transport protein particle subunit trs85-1 (658 aa).

This sequence belongs to the TRS85 family. In terms of assembly, part of the multisubunit TRAPP (transport protein particle) complexes I and II.

It localises to the golgi apparatus. Its subcellular location is the cis-Golgi network. Functionally, component of the TRAPP I and TRAPP II complexes. TRAPP I plays a key role in the late stages of endoplasmic reticulum to Golgi traffic. TRAPP II seems to play a role in intra-Golgi transport. Has a role late in meiosis following DNA replication. The polypeptide is Transport protein particle subunit trs85-1 (trs85-1) (Schizosaccharomyces pombe (strain 972 / ATCC 24843) (Fission yeast)).